Here is a 75-residue protein sequence, read N- to C-terminus: Acylphosphatase-like protein MJ1405 (75 aa).

The Acylphosphatase-like domain occupies 8–75 (TYEIIIYGRI…TNFWRVRKCK (68 aa)).

This chain is Acylphosphatase-like protein MJ1405, found in Methanocaldococcus jannaschii (strain ATCC 43067 / DSM 2661 / JAL-1 / JCM 10045 / NBRC 100440) (Methanococcus jannaschii).